We begin with the raw amino-acid sequence, 182 residues long: MSGRSVPHAHPATAEYEFANPSRLGEQRFGEGLLPEEILTPTLYHGYYVRPRAAPAGEGSRAGASELRLSEGKFQAFLDVSHFTPDEVTVRTVDNLLEVSARHPQRLDRHGFVSREFCRTYVLPADVDPWRVRAALSHDGILNLEAPRGGRHLDTEVNEVYISLLPAPPDPEEEEEAAIVEP.

One can recognise a sHSP domain in the interval 55-163 (PAGEGSRAGA…DTEVNEVYIS (109 aa)).

The protein belongs to the small heat shock protein (HSP20) family. In terms of assembly, interacts with DMPK; may enhance its kinase activity. Expressed preferentially in skeletal muscle and heart but not in the lens.

It is found in the cytoplasm. Its subcellular location is the nucleus. May regulate the kinase DMPK. This is Heat shock protein beta-2 (HSPB2) from Homo sapiens (Human).